Reading from the N-terminus, the 262-residue chain is Small ribosomal subunit protein eS1 (262 aa).

The protein belongs to the eukaryotic ribosomal protein eS1 family. As to quaternary structure, component of the small ribosomal subunit. Mature ribosomes consist of a small (40S) and a large (60S) subunit. The 40S subunit contains about 32 different proteins and 1 molecule of RNA (18S). The 60S subunit contains about 42 different proteins and 3 molecules of RNA (28S, 5.8S and 5S).

The protein resides in the cytoplasm. In terms of biological role, component of the ribosome, a large ribonucleoprotein complex responsible for the synthesis of proteins in the cell. The small ribosomal subunit (SSU) binds messenger RNAs (mRNAs) and translates the encoded message by selecting cognate aminoacyl-transfer RNA (tRNA) molecules. The large subunit (LSU) contains the ribosomal catalytic site termed the peptidyl transferase center (PTC), which catalyzes the formation of peptide bonds, thereby polymerizing the amino acids delivered by tRNAs into a polypeptide chain. The nascent polypeptides leave the ribosome through a tunnel in the LSU and interact with protein factors that function in enzymatic processing, targeting, and the membrane insertion of nascent chains at the exit of the ribosomal tunnel. This is Small ribosomal subunit protein eS1 from Plasmodium falciparum (isolate 3D7).